The following is a 368-amino-acid chain: Seipin-1 (368 aa).

A run of 3 helical transmembrane segments spans residues 26-46, 101-121, and 292-312; these read WFMVLVTIQADLIYNALVVLS, VMVLALILAVVIGVGIVSLYV, and LCVWTSMYLYVAILTALLWCF. The tract at residues 344-368 is disordered; it reads MERRRRERRNQPRRRNFATTQKSYT. Over residues 346-359 the composition is skewed to basic residues; that stretch reads RRRRERRNQPRRRN.

It belongs to the seipin family. As to expression, expressed in seeds and young seedlings. Not detected in leaves.

It localises to the endoplasmic reticulum membrane. In terms of biological role, involved in lipid metabolism and lipid droplet (LD) morphology, number, and size. Facilitates the formation of large-sized LDs and modulates triacylglycerol accumulation. Induces probably a reorganization of the endoplasmic reticulum into LD-forming domains. The sequence is that of Seipin-1 from Arabidopsis thaliana (Mouse-ear cress).